The chain runs to 308 residues: Transcription initiation factor IIB (308 aa).

2 repeat units span residues 124–207 (NELE…LREL) and 218–299 (DYVT…ELTQ).

It belongs to the TFIIB family.

In terms of biological role, stabilizes TBP binding to an archaeal box-A promoter. Also responsible for recruiting RNA polymerase II to the pre-initiation complex (DNA-TBP-TFIIB). The chain is Transcription initiation factor IIB from Sulfurisphaera tokodaii (strain DSM 16993 / JCM 10545 / NBRC 100140 / 7) (Sulfolobus tokodaii).